Here is a 94-residue protein sequence, read N- to C-terminus: Co-chaperonin GroES (94 aa).

Belongs to the GroES chaperonin family. In terms of assembly, heptamer of 7 subunits arranged in a ring. Interacts with the chaperonin GroEL.

Its subcellular location is the cytoplasm. Its function is as follows. Together with the chaperonin GroEL, plays an essential role in assisting protein folding. The GroEL-GroES system forms a nano-cage that allows encapsulation of the non-native substrate proteins and provides a physical environment optimized to promote and accelerate protein folding. GroES binds to the apical surface of the GroEL ring, thereby capping the opening of the GroEL channel. The chain is Co-chaperonin GroES from Bacillus subtilis (strain 168).